Reading from the N-terminus, the 428-residue chain is Light-independent protochlorophyllide reductase subunit N (428 aa).

Cys-31, Cys-56, and Cys-117 together coordinate [4Fe-4S] cluster.

This sequence belongs to the BchN/ChlN family. Protochlorophyllide reductase is composed of three subunits; BchL, BchN and BchB. Forms a heterotetramer of two BchB and two BchN subunits. Requires [4Fe-4S] cluster as cofactor.

It carries out the reaction chlorophyllide a + oxidized 2[4Fe-4S]-[ferredoxin] + 2 ADP + 2 phosphate = protochlorophyllide a + reduced 2[4Fe-4S]-[ferredoxin] + 2 ATP + 2 H2O. It participates in porphyrin-containing compound metabolism; bacteriochlorophyll biosynthesis (light-independent). Component of the dark-operative protochlorophyllide reductase (DPOR) that uses Mg-ATP and reduced ferredoxin to reduce ring D of protochlorophyllide (Pchlide) to form chlorophyllide a (Chlide). This reaction is light-independent. The NB-protein (BchN-BchB) is the catalytic component of the complex. The polypeptide is Light-independent protochlorophyllide reductase subunit N (Rhodopseudomonas palustris (strain HaA2)).